Reading from the N-terminus, the 506-residue chain is Glutamate--tRNA ligase (506 aa).

Residues 12–22 (PSPTGDPHVGT) carry the 'HIGH' region motif. A 'KMSKS' region motif is present at residues 253–257 (KLSKR). An ATP-binding site is contributed by Lys-256.

It belongs to the class-I aminoacyl-tRNA synthetase family. Glutamate--tRNA ligase type 1 subfamily. In terms of assembly, monomer.

Its subcellular location is the cytoplasm. It catalyses the reaction tRNA(Glu) + L-glutamate + ATP = L-glutamyl-tRNA(Glu) + AMP + diphosphate. Catalyzes the attachment of glutamate to tRNA(Glu) in a two-step reaction: glutamate is first activated by ATP to form Glu-AMP and then transferred to the acceptor end of tRNA(Glu). This chain is Glutamate--tRNA ligase, found in Chlamydia trachomatis serovar L2 (strain ATCC VR-902B / DSM 19102 / 434/Bu).